The sequence spans 160 residues: Cytochrome b6-f complex subunit 4 (160 aa).

3 helical membrane-spanning segments follow: residues 36–56, 95–115, and 131–151; these read LLYI…GLAV, LLGV…PFLE, and TVFL…TLPI.

The protein belongs to the cytochrome b family. PetD subfamily. As to quaternary structure, the 4 large subunits of the cytochrome b6-f complex are cytochrome b6, subunit IV (17 kDa polypeptide, petD), cytochrome f and the Rieske protein, while the 4 small subunits are petG, petL, petM and petN. The complex functions as a dimer.

The protein localises to the plastid. It localises to the chloroplast thylakoid membrane. In terms of biological role, component of the cytochrome b6-f complex, which mediates electron transfer between photosystem II (PSII) and photosystem I (PSI), cyclic electron flow around PSI, and state transitions. The polypeptide is Cytochrome b6-f complex subunit 4 (Coffea arabica (Arabian coffee)).